Consider the following 159-residue polypeptide: Transcription elongation factor GreA (159 aa).

Positions 47 to 77 form a coiled coil; it reads SENAEYDAARDKQATIENEITEIQHILDNYE.

The protein belongs to the GreA/GreB family.

Its function is as follows. Necessary for efficient RNA polymerase transcription elongation past template-encoded arresting sites. The arresting sites in DNA have the property of trapping a certain fraction of elongating RNA polymerases that pass through, resulting in locked ternary complexes. Cleavage of the nascent transcript by cleavage factors such as GreA or GreB allows the resumption of elongation from the new 3'terminus. GreA releases sequences of 2 to 3 nucleotides. The chain is Transcription elongation factor GreA from Metamycoplasma arthritidis (strain 158L3-1) (Mycoplasma arthritidis).